The primary structure comprises 303 residues: Methionyl-tRNA formyltransferase (303 aa).

Position 108-111 (108-111) interacts with (6S)-5,6,7,8-tetrahydrofolate; that stretch reads SDLP.

It belongs to the Fmt family.

The enzyme catalyses L-methionyl-tRNA(fMet) + (6R)-10-formyltetrahydrofolate = N-formyl-L-methionyl-tRNA(fMet) + (6S)-5,6,7,8-tetrahydrofolate + H(+). Its function is as follows. Attaches a formyl group to the free amino group of methionyl-tRNA(fMet). The formyl group appears to play a dual role in the initiator identity of N-formylmethionyl-tRNA by promoting its recognition by IF2 and preventing the misappropriation of this tRNA by the elongation apparatus. The polypeptide is Methionyl-tRNA formyltransferase (Rickettsia prowazekii (strain Madrid E)).